The chain runs to 250 residues: AA9 family lytic polysaccharide monooxygenase E (250 aa).

Residues 1 to 21 (MAMSKIMSLTGLLASASLVAG) form the signal peptide. Cu(2+)-binding residues include histidine 22 and histidine 107. 2 disulfide bridges follow: cysteine 77/cysteine 199 and cysteine 118/cysteine 122. The N-linked (GlcNAc...) asparagine glycan is linked to asparagine 159. O2 is bound by residues histidine 185 and glutamine 194. Tyrosine 196 lines the Cu(2+) pocket.

This sequence belongs to the polysaccharide monooxygenase AA9 family. Cu(2+) is required as a cofactor.

Its subcellular location is the secreted. It catalyses the reaction [(1-&gt;4)-beta-D-glucosyl]n+m + reduced acceptor + O2 = 4-dehydro-beta-D-glucosyl-[(1-&gt;4)-beta-D-glucosyl]n-1 + [(1-&gt;4)-beta-D-glucosyl]m + acceptor + H2O.. Its function is as follows. Lytic polysaccharide monooxygenase (LPMO) that depolymerizes crystalline and amorphous polysaccharides via the oxidation of scissile alpha- or beta-(1-4)-glycosidic bonds, yielding C1 or C4 oxidation products. Catalysis by LPMOs requires the reduction of the active-site copper from Cu(II) to Cu(I) by a reducing agent and H(2)O(2) or O(2) as a cosubstrate. In Aspergillus tamarii, this protein is AA9 family lytic polysaccharide monooxygenase E.